The sequence spans 465 residues: Ribulose bisphosphate carboxylase large chain (465 aa).

At lysine 4 the chain carries N6,N6,N6-trimethyllysine. The substrate site is built by asparagine 113 and threonine 163. The active-site Proton acceptor is lysine 165. Lysine 167 serves as a coordination point for substrate. Lysine 191, aspartate 193, and glutamate 194 together coordinate Mg(2+). The residue at position 191 (lysine 191) is an N6-carboxylysine. The active-site Proton acceptor is the histidine 284. Substrate is bound by residues arginine 285, histidine 317, and serine 369.

The protein belongs to the RuBisCO large chain family. Type I subfamily. In terms of assembly, heterohexadecamer of 8 large chains and 8 small chains; disulfide-linked. The disulfide link is formed within the large subunit homodimers. Requires Mg(2+) as cofactor. In terms of processing, the disulfide bond which can form in the large chain dimeric partners within the hexadecamer appears to be associated with oxidative stress and protein turnover.

Its subcellular location is the plastid. The protein localises to the chloroplast. It carries out the reaction 2 (2R)-3-phosphoglycerate + 2 H(+) = D-ribulose 1,5-bisphosphate + CO2 + H2O. The enzyme catalyses D-ribulose 1,5-bisphosphate + O2 = 2-phosphoglycolate + (2R)-3-phosphoglycerate + 2 H(+). Functionally, ruBisCO catalyzes two reactions: the carboxylation of D-ribulose 1,5-bisphosphate, the primary event in carbon dioxide fixation, as well as the oxidative fragmentation of the pentose substrate in the photorespiration process. Both reactions occur simultaneously and in competition at the same active site. This chain is Ribulose bisphosphate carboxylase large chain, found in Passiflora quadrangularis (Grenadine).